Consider the following 418-residue polypeptide: Light-independent protochlorophyllide reductase subunit N (418 aa).

Residues Cys-17, Cys-42, and Cys-103 each coordinate [4Fe-4S] cluster.

This sequence belongs to the BchN/ChlN family. Protochlorophyllide reductase is composed of three subunits; ChlL, ChlN and ChlB. Forms a heterotetramer of two ChlB and two ChlN subunits. [4Fe-4S] cluster is required as a cofactor.

It catalyses the reaction chlorophyllide a + oxidized 2[4Fe-4S]-[ferredoxin] + 2 ADP + 2 phosphate = protochlorophyllide a + reduced 2[4Fe-4S]-[ferredoxin] + 2 ATP + 2 H2O. Its pathway is porphyrin-containing compound metabolism; chlorophyll biosynthesis (light-independent). In terms of biological role, component of the dark-operative protochlorophyllide reductase (DPOR) that uses Mg-ATP and reduced ferredoxin to reduce ring D of protochlorophyllide (Pchlide) to form chlorophyllide a (Chlide). This reaction is light-independent. The NB-protein (ChlN-ChlB) is the catalytic component of the complex. The chain is Light-independent protochlorophyllide reductase subunit N from Prochlorococcus marinus (strain MIT 9215).